We begin with the raw amino-acid sequence, 153 residues long: 6,7-dimethyl-8-ribityllumazine synthase (153 aa).

Residues phenylalanine 22, 56-58 (AFE), and 80-82 (AVI) contribute to the 5-amino-6-(D-ribitylamino)uracil site. 85 to 86 (ST) contacts (2S)-2-hydroxy-3-oxobutyl phosphate. Histidine 88 acts as the Proton donor in catalysis. Residue phenylalanine 113 participates in 5-amino-6-(D-ribitylamino)uracil binding. Arginine 127 contacts (2S)-2-hydroxy-3-oxobutyl phosphate.

This sequence belongs to the DMRL synthase family.

The catalysed reaction is (2S)-2-hydroxy-3-oxobutyl phosphate + 5-amino-6-(D-ribitylamino)uracil = 6,7-dimethyl-8-(1-D-ribityl)lumazine + phosphate + 2 H2O + H(+). It functions in the pathway cofactor biosynthesis; riboflavin biosynthesis; riboflavin from 2-hydroxy-3-oxobutyl phosphate and 5-amino-6-(D-ribitylamino)uracil: step 1/2. In terms of biological role, catalyzes the formation of 6,7-dimethyl-8-ribityllumazine by condensation of 5-amino-6-(D-ribitylamino)uracil with 3,4-dihydroxy-2-butanone 4-phosphate. This is the penultimate step in the biosynthesis of riboflavin. This chain is 6,7-dimethyl-8-ribityllumazine synthase, found in Clostridium botulinum (strain Alaska E43 / Type E3).